We begin with the raw amino-acid sequence, 556 residues long: Glutamine--tRNA ligase (556 aa).

A 'HIGH' region motif is present at residues 35–45 (PEPNGYLHIGH). ATP contacts are provided by residues 36 to 38 (EPN) and 42 to 48 (HIGHAKS). Aspartate 68 and tyrosine 213 together coordinate L-glutamine. Residues threonine 232 and 262 to 263 (RL) each bind ATP. The 'KMSKS' region motif lies at 269–273 (VTSKR).

The protein belongs to the class-I aminoacyl-tRNA synthetase family. Monomer.

It localises to the cytoplasm. It carries out the reaction tRNA(Gln) + L-glutamine + ATP = L-glutaminyl-tRNA(Gln) + AMP + diphosphate. This Pseudomonas aeruginosa (strain ATCC 15692 / DSM 22644 / CIP 104116 / JCM 14847 / LMG 12228 / 1C / PRS 101 / PAO1) protein is Glutamine--tRNA ligase.